The primary structure comprises 242 residues: Methylthioribulose-1-phosphate dehydratase (242 aa).

Positions 1–11 are enriched in basic and acidic residues; it reads MAQEIQKENND. The interval 1 to 20 is disordered; sequence MAQEIQKENNDHLVQSSDPE. C100 provides a ligand contact to substrate. Zn(2+) contacts are provided by H117 and H119. Residue E146 is the Proton donor/acceptor of the active site. Residue H202 coordinates Zn(2+).

This sequence belongs to the aldolase class II family. MtnB subfamily. It depends on Zn(2+) as a cofactor.

The protein resides in the cytoplasm. The catalysed reaction is 5-(methylsulfanyl)-D-ribulose 1-phosphate = 5-methylsulfanyl-2,3-dioxopentyl phosphate + H2O. It participates in amino-acid biosynthesis; L-methionine biosynthesis via salvage pathway; L-methionine from S-methyl-5-thio-alpha-D-ribose 1-phosphate: step 2/6. Functionally, catalyzes the dehydration of methylthioribulose-1-phosphate (MTRu-1-P) into 2,3-diketo-5-methylthiopentyl-1-phosphate (DK-MTP-1-P). In Aspergillus niger (strain ATCC MYA-4892 / CBS 513.88 / FGSC A1513), this protein is Methylthioribulose-1-phosphate dehydratase.